Here is a 428-residue protein sequence, read N- to C-terminus: Enolase (428 aa).

Gln163 is a binding site for (2R)-2-phosphoglycerate. Glu205 (proton donor) is an active-site residue. Asp242, Glu285, and Asp312 together coordinate Mg(2+). Positions 337, 366, 367, and 388 each coordinate (2R)-2-phosphoglycerate. Catalysis depends on Lys337, which acts as the Proton acceptor.

The protein belongs to the enolase family. The cofactor is Mg(2+).

The protein resides in the cytoplasm. It is found in the secreted. The protein localises to the cell surface. The enzyme catalyses (2R)-2-phosphoglycerate = phosphoenolpyruvate + H2O. It participates in carbohydrate degradation; glycolysis; pyruvate from D-glyceraldehyde 3-phosphate: step 4/5. Its function is as follows. Catalyzes the reversible conversion of 2-phosphoglycerate (2-PG) into phosphoenolpyruvate (PEP). It is essential for the degradation of carbohydrates via glycolysis. The polypeptide is Enolase (Neisseria meningitidis serogroup A / serotype 4A (strain DSM 15465 / Z2491)).